A 409-amino-acid chain; its full sequence is Glycosyltransferase GtfE (409 aa).

It belongs to the glycosyltransferase 28 family.

It participates in antibiotic biosynthesis; vancomycin biosynthesis. In terms of biological role, D-glucosyltransferase that acts on the aglycone core, transferring D-glucose to the phenolic hydroxyl of OH-Phegly(4) to form a devancoaminyl-vancomycin (DVV) intermediate in the biosynthesis of glycopeptide antibiotic vancomycin. Also able to glycosylate A47934, an antibiotic with a teicoplanin-like heptapeptide, but lacking sugar residues. The chain is Glycosyltransferase GtfE (gtfE) from Amycolatopsis orientalis (Nocardia orientalis).